A 302-amino-acid chain; its full sequence is Heme A synthase (302 aa).

Residues 1–8 lie on the Cytoplasmic side of the membrane; it reads MFSKKNLK. A helical membrane pass occupies residues 9–29; that stretch reads WLSVLATVIMAFVQLGGALVT. The Extracellular segment spans residues 30-67; sequence KTGSADGCGSDWPLCHGAFLPQNLPIQTLIELSHRAVS. Cysteine 37 and cysteine 44 are disulfide-bonded. The active site involves glutamate 60. Histidine 63 is a heme o binding site. Residues 68 to 88 form a helical membrane-spanning segment; the sequence is GLSLIVVLWLVIVAWKHIGYI. At 89-93 the chain is on the cytoplasmic side; sequence KEVKP. The helical transmembrane segment at 94–114 threads the bilayer; it reads LSCISVGFLLIQALVGAAAVM. Residues 115-122 are Extracellular-facing; that stretch reads WQQNAYVL. The chain crosses the membrane as a helical span at residues 123 to 143; it reads ALHFGISLISFSSVFVLTLII. Histidine 125 is a binding site for heme o. At 144–161 the chain is on the cytoplasmic side; that stretch reads YEVDRKYEADELFIRKPL. The chain crosses the membrane as a helical span at residues 162-182; the sequence is RIYTWIMALIVYMTIYTGALV. The Extracellular segment spans residues 183-215; that stretch reads RHKEASLAYGQWPLPFNDLMPHNVQDWVNLTHR. Histidine 214 is a binding site for heme b. A helical membrane pass occupies residues 216–236; that stretch reads GMALIAFIWILITFIHAVNNY. Topologically, residues 237 to 244 are cytoplasmic; that stretch reads RENRTIRY. A helical membrane pass occupies residues 245-265; sequence GYTAAFILVILQVTTGALSII. Topologically, residues 266–271 are extracellular; the sequence is TEVNLF. A helical transmembrane segment spans residues 272–292; it reads IALLHALFITLLFGLIAYFII. Histidine 276 provides a ligand contact to heme b. At 293 to 302 the chain is on the cytoplasmic side; it reads LMLRTIRSGG.

It belongs to the COX15/CtaA family. Type 1 subfamily. Interacts with CtaB. Requires heme b as cofactor.

It localises to the cell membrane. The catalysed reaction is Fe(II)-heme o + 2 A + H2O = Fe(II)-heme a + 2 AH2. It functions in the pathway porphyrin-containing compound metabolism; heme A biosynthesis; heme A from heme O: step 1/1. Its function is as follows. Catalyzes the conversion of heme O to heme A by two successive hydroxylations of the methyl group at C8. The first hydroxylation forms heme I, the second hydroxylation results in an unstable dihydroxymethyl group, which spontaneously dehydrates, resulting in the formyl group of heme A. This is Heme A synthase from Staphylococcus saprophyticus subsp. saprophyticus (strain ATCC 15305 / DSM 20229 / NCIMB 8711 / NCTC 7292 / S-41).